The sequence spans 359 residues: Peptide chain release factor 1 (359 aa).

Q233 carries the N5-methylglutamine modification.

The protein belongs to the prokaryotic/mitochondrial release factor family. Post-translationally, methylated by PrmC. Methylation increases the termination efficiency of RF1.

The protein localises to the cytoplasm. Functionally, peptide chain release factor 1 directs the termination of translation in response to the peptide chain termination codons UAG and UAA. In Orientia tsutsugamushi (strain Boryong) (Rickettsia tsutsugamushi), this protein is Peptide chain release factor 1.